A 273-amino-acid chain; its full sequence is MALNSINTNSGALIALQNLNTTSSELNNVQQRISTGKKIGSAKDNGAIWATAKNQSATANSINAVKDSLQRGQSTIDVALAAGDTITDLLGKMKEKALAASDTSLSTASFNALKADFDSLRDQVTKAATNAKFNGVSIADGTTTKLSFLANSDGSAFTVTAKTLTLGGLGLTTTSSFTTAAAAKTMIGTIDTALQTATNKLASLGTSSTGLDTHLTFVGKLQDSLDAGVGNLMDADLAKESARLQSLQTKQQLGVQALSIANSSSSAILSLFR.

It belongs to the bacterial flagellin family. As to quaternary structure, in C.crescentus, the flagellar filament is composed of multiple flagellins of 29 kDa; 27 kDa and 25 kDa.

Its subcellular location is the secreted. The protein resides in the bacterial flagellum. In terms of biological role, flagellin is the subunit protein which polymerizes to form the filaments of bacterial flagella. In Caulobacter vibrioides (strain ATCC 19089 / CIP 103742 / CB 15) (Caulobacter crescentus), this protein is Flagellin FljO (fljO).